The sequence spans 287 residues: MITLLTKPTVFLITGLSGAGKTLLLQSLEDEGYYTVDNIPPHLIESFLNILCTSNVKKLAIVSDIRWKDPQKLIELFKNVESLAKCTMEIHKVFLKADKSELINRYKKTRRTHPLGLSLENAIDEEIKVMSEIESSCDIVIDTSSTEPTEFKKRFFQMIKEDMKKLKLNFISFGFKNGIPPISDYVFDVRYLPNPFYFPEMYELTGLDMKVMEFLEKFKETHETVDKIANLAKFIQDKYSESGRIEAYFCIGCTGGQHRSVYIAQKVYEILKKEGREVSIDHRDIER.

15–22 (GLSGAGKT) is an ATP binding site. Residue 64 to 67 (DIRW) participates in GTP binding.

The protein belongs to the RapZ-like family.

Its function is as follows. Displays ATPase and GTPase activities. In Petrotoga mobilis (strain DSM 10674 / SJ95), this protein is Nucleotide-binding protein Pmob_0154.